The following is a 600-amino-acid chain: 1,8-cineole synthase 1, chloroplastic (600 aa).

A chloroplast-targeting transit peptide spans 1–31; the sequence is MATLRISSALIYQNTLTHHFRLRRPHRFVCK. Aspartate 342 serves as a coordination point for dimethylallyl diphosphate. Residues aspartate 342 and aspartate 346 each coordinate Mg(2+). Positions 342-346 match the DDXXD motif motif; the sequence is DDIYD. Glutamate 420, arginine 484, and asparagine 487 together coordinate dimethylallyl diphosphate. Mg(2+) contacts are provided by asparagine 487, threonine 491, and glutamate 495.

The protein belongs to the terpene synthase family. Tpsb subfamily. Mg(2+) serves as cofactor. It depends on Mn(2+) as a cofactor. As to expression, predominantly expressed in roots and at much lower levels in siliques. Not found in leaves, flowers or stems. Also detected in flowers in cv. Landsberg erecta. Not expressed in root apical meristem and elongation zone. Found in the vascular system of young roots and additionally in the cortex and epidermal cell layer of older roots.

The protein resides in the plastid. It is found in the chloroplast. It catalyses the reaction (2E)-geranyl diphosphate + H2O = 1,8-cineole + diphosphate. It participates in secondary metabolite biosynthesis; terpenoid biosynthesis. In terms of biological role, involved in monoterpene (C10) biosynthesis. The major product is 1,8-cineole (52%) followed by minor amounts of sabinene (14.5%), myrcene (13.3%), (-)-(1S)-beta-pinene (7.8%), (-)-(4S)-limonene (4.0%), (E)-beta-ocimene (2.7%), alpha-terpineol (2.4%), (-)-(1S)-alpha-pinene (1.9%), terpinolene (0.8%), and (+)-alpha-thujene (0.6%). The sequence is that of 1,8-cineole synthase 1, chloroplastic (TPS27) from Arabidopsis thaliana (Mouse-ear cress).